The sequence spans 889 residues: Potassium/sodium hyperpolarization-activated cyclic nucleotide-gated channel 2 (889 aa).

Gly residues predominate over residues 1–10 (MDARGGGGRP). The tract at residues 1-159 (MDARGGGGRP…GPAGEPRGSQ (159 aa)) is disordered. Over 1 to 215 (MDARGGGGRP…PYSDFRFYWD (215 aa)) the chain is Cytoplasmic. Over residues 17 to 55 (TPAPGPPPPPPPAPPQQQPPPPPPPAPPPGPGPAPPQHP) the composition is skewed to pro residues. Residues 129-155 (GAASGPAPGPGPAEEAGSEEAGPAGEP) are compositionally biased toward low complexity. Residues S146 and S161 each carry the phosphoserine modification. Residues 158–209 (SQASFMQRQFGALLQPGVNKFSLRMFGSQKAVEREQERVKSAGAWIIHPYSD) form an involved in subunit assembly region. Residues 216–236 (FTMLLFMVGNLIIIPVGITFF) form a helical membrane-spanning segment. Residues 237–240 (KDET) are Extracellular-facing. Residues 241 to 261 (TAPWIVFNVVSDTFFLMDLVL) traverse the membrane as a helical segment. The Cytoplasmic segment spans residues 262 to 288 (NFRTGIVIEDNTEIILDPEKIKKKYLR). Residues 289 to 309 (TWFVVDFVSSIPVDYIFLIVE) traverse the membrane as a helical segment. The Extracellular portion of the chain corresponds to 310-317 (KGIDSEVY). The chain crosses the membrane as a helical; Voltage-sensor span at residues 318–338 (KTARALRIVRFTKILSLLRLL). Topologically, residues 339 to 369 (RLSRLIRYIHQWEEIFHMTYDLASAVMRICN) are cytoplasmic. Residues 370-390 (LISMMLLLCHWDGCLQFLVPM) traverse the membrane as a helical segment. The Extracellular segment spans residues 391–413 (LQDFPRNCWVSINGMVNHSWSEL). The N-linked (GlcNAc...) asparagine glycan is linked to N407. Residues 414–435 (YSFALFKAMSHMLCIGYGRQAP) constitute an intramembrane region (pore-forming). Topologically, residues 436–440 (ESMTD) are extracellular. A helical membrane pass occupies residues 441–461 (IWLTMLSMIVGATCYAMFIGH). Residues 462–889 (ATALIQSLDS…SARSRLSSNL (428 aa)) lie on the Cytoplasmic side of the membrane. Residues M599, G608, E609, I610, C611, R618, T619, and R659 each contribute to the 3',5'-cyclic AMP site. S668 carries the phosphoserine; by PKG/PRKG2 modification. Residue S754 is modified to Phosphoserine. Residues 754-889 (SPRLVRRPPP…SARSRLSSNL (136 aa)) are disordered. At R756 the chain carries Omega-N-methylarginine. Over residues 760-784 (RPPPGPAPAAASPGPPPPASPPGAP) the composition is skewed to pro residues. Phosphoserine is present on residues S771, S779, S786, S866, and S868. The span at 785-860 (ASPRAPRTSP…TPAARAAAPS (76 aa)) shows a compositional bias: low complexity.

The protein belongs to the potassium channel HCN family. Homotetramer. The channel is composed of a homo- or heterotetrameric complex of pore-forming subunits. Heterotetramer with HCN1. Forms an obligate 4:4 complex with accessory subunit PEX5L. Interacts with KCNE2. Phosphorylation at Ser-668 by PRKG2 shifts the voltage-dependence to more negative voltages, hence counteracting the stimulatory effect of cGMP on gating. Post-translationally, S-palmitoylated. In terms of processing, N-glycosylated; required for cell surface trafficking of HCN2. As to expression, highly expressed throughout the brain. Detected at low levels in heart.

Its subcellular location is the cell membrane. It catalyses the reaction Na(+)(in) = Na(+)(out). The enzyme catalyses K(+)(in) = K(+)(out). It carries out the reaction NH4(+)(in) = NH4(+)(out). With respect to regulation, activated by cAMP, and at 10-100 times higher concentrations, also by cGMP. cAMP binding causes a conformation change that leads to the assembly of an active tetramer and channel opening. Binding of cAMP removes a tonic inhibition conferred by cyclic nucleotide-binding domain (CNBD) on channel opening. Channel activity is modulated by intracellular chloride ions and pH; acidic pH shifts the activation to more negative voltages. Inhibited by extracellular cesium ions. In terms of biological role, hyperpolarization-activated ion channel that is permeable to sodium and potassium ions. Displays lower selectivity for K(+) over Na(+) ions. Contributes to the native pacemaker currents in heart (If) and in neurons (Ih). Can also transport ammonium in the distal nephron. Involved in the initiation of neuropathic pain in sensory neurons. This Homo sapiens (Human) protein is Potassium/sodium hyperpolarization-activated cyclic nucleotide-gated channel 2.